Consider the following 959-residue polypeptide: Leucine--tRNA ligase (959 aa).

Positions 39 to 49 (PYVNAYPHLGS) match the 'HIGH' region motif. The 'KMSKS' region signature appears at 637–641 (KMSKS). K640 serves as a coordination point for ATP. The tract at residues 933–959 (TEEDGGSPRRANALPGRPALYAEKRGG) is disordered.

The protein belongs to the class-I aminoacyl-tRNA synthetase family.

The protein localises to the cytoplasm. The catalysed reaction is tRNA(Leu) + L-leucine + ATP = L-leucyl-tRNA(Leu) + AMP + diphosphate. The chain is Leucine--tRNA ligase from Aeropyrum pernix (strain ATCC 700893 / DSM 11879 / JCM 9820 / NBRC 100138 / K1).